We begin with the raw amino-acid sequence, 67 residues long: Protein AaeX (67 aa).

2 helical membrane-spanning segments follow: residues 3–23 and 43–63; these read LFPVIVVFGLSFPPIFFELLL and FVWHPALFNTALYCCLFYLIS.

The protein belongs to the AaeX family.

Its subcellular location is the cell membrane. The polypeptide is Protein AaeX (Escherichia coli O1:K1 / APEC).